The following is a 53-amino-acid chain: Sec-independent protein translocase protein TatA (53 aa).

Residues 1 to 21 (MGMSFSHLLIVLLIIFVLFGA) form a helical membrane-spanning segment.

The protein belongs to the TatA/E family. In terms of assembly, the Tat system comprises two distinct complexes: a TatABC complex, containing multiple copies of TatA, TatB and TatC subunits, and a separate TatA complex, containing only TatA subunits. Substrates initially bind to the TatABC complex, which probably triggers association of the separate TatA complex to form the active translocon.

It localises to the cell inner membrane. Its function is as follows. Part of the twin-arginine translocation (Tat) system that transports large folded proteins containing a characteristic twin-arginine motif in their signal peptide across membranes. TatA could form the protein-conducting channel of the Tat system. The protein is Sec-independent protein translocase protein TatA of Rickettsia typhi (strain ATCC VR-144 / Wilmington).